The sequence spans 829 residues: Periplasmic nitrate reductase (829 aa).

Residues 1-27 (MNRRDFMKANAVIAAASAAGLALPAGA) constitute a signal peptide (tat-type signal). Positions 39–95 (LEWNKAPCRFCGTGCSVMVATREGKVVATHGDANSEVNRGLSCIKGYFLSKIMYGRD) constitute a 4Fe-4S Mo/W bis-MGD-type domain. Residues C46, C49, C53, and C81 each contribute to the [4Fe-4S] cluster site. Mo-bis(molybdopterin guanine dinucleotide) is bound by residues K83, Q150, N175, C179, 212–219 (WGSNMAEM), 243–247 (STFEH), 262–264 (QTD), M373, Q377, N483, 509–510 (SD), K532, D559, and 719–728 (TGRVLEHWHS). W795 is a binding site for substrate. Positions 803 and 820 each coordinate Mo-bis(molybdopterin guanine dinucleotide).

The protein belongs to the prokaryotic molybdopterin-containing oxidoreductase family. NasA/NapA/NarB subfamily. As to quaternary structure, component of the periplasmic nitrate reductase NapAB complex composed of NapA and NapB. [4Fe-4S] cluster is required as a cofactor. Requires Mo-bis(molybdopterin guanine dinucleotide) as cofactor. Predicted to be exported by the Tat system. The position of the signal peptide cleavage has not been experimentally proven.

The protein resides in the periplasm. The enzyme catalyses 2 Fe(II)-[cytochrome] + nitrate + 2 H(+) = 2 Fe(III)-[cytochrome] + nitrite + H2O. Functionally, catalytic subunit of the periplasmic nitrate reductase complex NapAB. Receives electrons from NapB and catalyzes the reduction of nitrate to nitrite. The polypeptide is Periplasmic nitrate reductase (Shewanella denitrificans (strain OS217 / ATCC BAA-1090 / DSM 15013)).